The chain runs to 509 residues: Poly(A) RNA polymerase GLD2-A (509 aa).

The interval 88–107 is disordered; that stretch reads PGSPSSSFQNRKRRSDEGNV. The Mg(2+) site is built by aspartate 240 and aspartate 242. The 54-residue stretch at 409–462 folds into the PAP-associated domain; sequence LGDLLLGFLKYFAVEFDWSKDIISVREGKALPRSDDYLWRNKYICVEEPFDGTN.

It belongs to the DNA polymerase type-B-like family. GLD2 subfamily. In terms of assembly, component of a complex at least composed of cpeb1, cpsf1, tent2/gld2, pabpc1/ePAB, parn and sympk. Following oocyte maturation, parn is expelled from the complex. Interacts with rbfox2 and sympk. Mg(2+) serves as cofactor. It depends on Mn(2+) as a cofactor.

It is found in the cytoplasm. It catalyses the reaction RNA(n) + ATP = RNA(n)-3'-adenine ribonucleotide + diphosphate. In terms of biological role, cytoplasmic poly(A) RNA polymerase that adds successive AMP monomers to the 3'-end of specific RNAs, forming a poly(A) tail. In contrast to the canonical nuclear poly(A) RNA polymerase, it only adds poly(A) to selected cytoplasmic mRNAs during oocyte maturation. Plays a central role during oocyte maturation by mediating polyadenylation of dormant mRNAs, which contain 5'AAUAAA-3' sequence in their 3'UTR. In immature oocytes, polyadenylation of poly(A) tails is counteracted by the ribonuclease parn. During maturation parn is excluded from the ribonucleoprotein complex, allowing poly(A) elongation and activation of mRNAs. May not play a role in replication-dependent histone mRNA degradation. This Xenopus laevis (African clawed frog) protein is Poly(A) RNA polymerase GLD2-A (tent2-a).